The primary structure comprises 601 residues: Vesicular glutamate transporter 3 (601 aa).

Residues 1–89 (MPFKAFDTFK…CSCCGIPKRY (89 aa)) are Cytoplasmic-facing. A helical transmembrane segment spans residues 90–110 (IIAVMSGLGFCISFGIRCNLG). The Vesicular portion of the chain corresponds to 111–143 (VAIVEMVNNSTVYVDGKPEIQTAQFNWDPETVG). Asn119 carries an N-linked (GlcNAc...) asparagine glycan. The chain crosses the membrane as a helical span at residues 144–164 (LIHGSFFWGYIVTQIPGGFIS). Residues 165 to 166 (NK) are Cytoplasmic-facing. The chain crosses the membrane as a helical span at residues 167 to 187 (FAASRVFGAAIFLTSTLNMFI). Topologically, residues 188 to 195 (PSAARVHY) are vesicular. The chain crosses the membrane as a helical span at residues 196-216 (GCVMGVRILQGLVEGVTYPAC). Residues 217-234 (HGMWSKWAPPLERSRLAT) lie on the Cytoplasmic side of the membrane. A helical membrane pass occupies residues 235–255 (TSFCGSYAGAVVAMPLAGVLV). At 256–262 (QYIGWAS) the chain is on the vesicular side. A helical membrane pass occupies residues 263 to 283 (VFYIYGMFGIIWYMFWLLQAY). The Cytoplasmic segment spans residues 284–327 (ECPAAHPTISNAERTYIETSIGEGANLASLSKFNTPWRRFFTSL). The helical transmembrane segment at 328-348 (PVYAIIVANFCRSWTFYLLLI) threads the bilayer. The Vesicular portion of the chain corresponds to 349 to 366 (SQPAYFEEVFGFAISKVG). A helical membrane pass occupies residues 367–387 (LLSAVPHMVMTIVVPIGGQLA). Residues 388-403 (DYLRSRKILTTTAVRK) lie on the Cytoplasmic side of the membrane. A helical transmembrane segment spans residues 404 to 424 (IMNCGGFGMEATLLLVVGFSH). Topologically, residues 425 to 426 (TK) are vesicular. A helical transmembrane segment spans residues 427 to 447 (GVAISFLVLAVGFSGFAISGF). Residues 448–460 (NVNHLDIAPRYAS) are Cytoplasmic-facing. The helical transmembrane segment at 461-481 (ILMGISNGVGTLSGMVCPLIV) threads the bilayer. At 482–494 (GAMTKHKTREEWQ) the chain is on the vesicular side. Residues 495 to 515 (NVFLIAALVHYSGVIFYGVFA) form a helical membrane-spanning segment. Residues 516–598 (SGEKQDWADP…LSYQAEGDFS (83 aa)) lie on the Cytoplasmic side of the membrane. Residues 576-601 (RQQRESAFDGEEPLSYQAEGDFSETS) are disordered.

This sequence belongs to the major facilitator superfamily. Sodium/anion cotransporter family. VGLUT subfamily. Expressed in restricted areas of the brain. Highest expression is found in the neurons of the basal forebrain, the hippocampal formation, and the majority of the neurons of the mesencephalic raphe nuclei. Expressed in inner hair cells of the ear.

Its subcellular location is the cytoplasmic vesicle. It localises to the secretory vesicle. It is found in the synaptic vesicle membrane. The protein resides in the cell membrane. The protein localises to the synapse. Its subcellular location is the synaptosome. It catalyses the reaction L-glutamate(out) = L-glutamate(in). The enzyme catalyses 3 Na(+)(out) + phosphate(out) = 3 Na(+)(in) + phosphate(in). It carries out the reaction chloride(in) = chloride(out). With respect to regulation, the L-glutamate uniporter activity exhibits a biphasic dependence on chloride concentration. Chloride channel activity is allosterically activated by lumenal H(+) and Cl(-) leading to synaptic vesicles acidification. The L-glutamate transport activity is allosterically activated by lumenal H(+) and Cl(-), preventing non-vesicular L-glutamate release. Multifunctional transporter that transports L-glutamate as well as multiple ions such as chloride, sodium and phosphate. At the synaptic vesicle membrane, mainly functions as an uniporter that mediates the uptake of L-glutamate into synaptic vesicles at presynaptic nerve terminals of excitatory neural cells. The L-glutamate uniporter activity is electrogenic and is driven by the proton electrochemical gradient, mainly by the electrical gradient established by the vacuolar H(+)-ATPase across the synaptic vesicle membrane. In addition, functions as a chloride channel that allows a chloride permeation through the synaptic vesicle membrane that affects the proton electrochemical gradient and promotes synaptic vesicles acidification. At the plasma membrane, following exocytosis, functions as a symporter of Na(+) and phosphate from the extracellular space to the cytoplasm allowing synaptic phosphate homeostasis regulation. The symporter activity is electrogenic. Moreover, operates synergistically with SLC18A3/VACHT under a constant H(+) gradient, thereby allowing striatal vesicular acetylcholine uptake. This chain is Vesicular glutamate transporter 3, found in Mus musculus (Mouse).